Reading from the N-terminus, the 349-residue chain is 3-dehydroquinate synthase (349 aa).

Residues 63–68, 97–101, 121–122, Lys-134, Lys-143, and 161–164 each bind NAD(+); these read DGEEYK, GVIGD, TT, and FLTT. Zn(2+) is bound by residues Glu-176, His-235, and His-252.

Belongs to the sugar phosphate cyclases superfamily. Dehydroquinate synthase family. The cofactor is Co(2+). Requires Zn(2+) as cofactor. It depends on NAD(+) as a cofactor.

The protein localises to the cytoplasm. It carries out the reaction 7-phospho-2-dehydro-3-deoxy-D-arabino-heptonate = 3-dehydroquinate + phosphate. It participates in metabolic intermediate biosynthesis; chorismate biosynthesis; chorismate from D-erythrose 4-phosphate and phosphoenolpyruvate: step 2/7. Catalyzes the conversion of 3-deoxy-D-arabino-heptulosonate 7-phosphate (DAHP) to dehydroquinate (DHQ). This is 3-dehydroquinate synthase from Sulfurimonas denitrificans (strain ATCC 33889 / DSM 1251) (Thiomicrospira denitrificans (strain ATCC 33889 / DSM 1251)).